Consider the following 290-residue polypeptide: D-tagatose-1,6-bisphosphate aldolase subunit KbaY (290 aa).

Catalysis depends on aspartate 82, which acts as the Proton donor. The Zn(2+) site is built by histidine 83 and histidine 180. Glycine 181 is a dihydroxyacetone phosphate binding site. A Zn(2+)-binding site is contributed by histidine 208. Residues 209–211 (GAS) and 230–233 (NVAT) each bind dihydroxyacetone phosphate.

The protein belongs to the class II fructose-bisphosphate aldolase family. TagBP aldolase KbaY subfamily. Homotetramer. Forms a complex with KbaZ. Requires Zn(2+) as cofactor.

The enzyme catalyses D-tagatofuranose 1,6-bisphosphate = D-glyceraldehyde 3-phosphate + dihydroxyacetone phosphate. Its pathway is carbohydrate metabolism; D-tagatose 6-phosphate degradation; D-glyceraldehyde 3-phosphate and glycerone phosphate from D-tagatose 6-phosphate: step 2/2. Functionally, catalytic subunit of the tagatose-1,6-bisphosphate aldolase KbaYZ, which catalyzes the reversible aldol condensation of dihydroxyacetone phosphate (DHAP or glycerone-phosphate) with glyceraldehyde 3-phosphate (G3P) to produce tagatose 1,6-bisphosphate (TBP). Requires KbaZ subunit for full activity and stability. The chain is D-tagatose-1,6-bisphosphate aldolase subunit KbaY from Salmonella arizonae (strain ATCC BAA-731 / CDC346-86 / RSK2980).